An 889-amino-acid polypeptide reads, in one-letter code: A disintegrin and metalloproteinase with thrombospondin motifs 8 (889 aa).

The signal sequence occupies residues 1–26; the sequence is MLPAPAAPRWPPLLLLLLLLLPLARG. A propeptide spanning residues 27-213 is cleaved from the precursor; sequence APARPAAGGQ…PLGATSRTKR (187 aa). Positions 138-210 are disordered; the sequence is QGAGGSLAQP…PPPPLGATSR (73 aa). Residues 173-183 are compositionally biased toward basic and acidic residues; sequence EGQRQERGDHQ. Acidic residues predominate over residues 184-197; it reads EDSEEESQEEEAEG. In terms of domain architecture, Peptidase M12B spans 219–429; the sequence is RFVETLLVAD…GHGDCLLDAP (211 aa). 11 cysteine pairs are disulfide-bonded: Cys294-Cys347, Cys323-Cys329, Cys341-Cys424, Cys379-Cys408, Cys452-Cys477, Cys463-Cys486, Cys472-Cys507, Cys501-Cys512, Cys538-Cys575, Cys542-Cys580, and Cys553-Cys565. An N-linked (GlcNAc...) asparagine glycan is attached at Asn344. His363 serves as a coordination point for Zn(2+). The active site involves Glu364. His367 and His373 together coordinate Zn(2+). Residues Asn400, Asn465, and Asn490 are each glycosylated (N-linked (GlcNAc...) asparagine). In terms of domain architecture, Disintegrin spans 438-525; it reads GLPGRMALYQ…EEVERPKPVA (88 aa). The 56-residue stretch at 526 to 581 folds into the TSP type-1 1 domain; sequence DGGWAPWGPWGECSRTCGGGVQFSHRECKDPEPQNGGRYCLGRRAKYQSCHTEECP. An N-linked (GlcNAc...) asparagine glycan is attached at Asn599. The segment at 690-831 is spacer; that stretch reads RKVSGSLTPT…RATTNIIQPL (142 aa). In terms of domain architecture, TSP type-1 2 spans 833 to 888; the sequence is HAQWVLGDWSECSSTCGAGWQRRTVECRDPSGQASATCNKALKPEDAKPCESQLCP.

The cofactor is Zn(2+). In terms of processing, the precursor is cleaved by a furin endopeptidase. Post-translationally, glycosylated. Can be O-fucosylated by POFUT2 on a serine or a threonine residue found within the consensus sequence C1-X(2)-(S/T)-C2-G of the TSP type-1 repeat domains where C1 and C2 are the first and second cysteine residue of the repeat, respectively. Fucosylated repeats can then be further glycosylated by the addition of a beta-1,3-glucose residue by the glucosyltransferase, B3GALTL. Fucosylation mediates the efficient secretion of ADAMTS family members. Can also be C-glycosylated with one or two mannose molecules on tryptophan residues within the consensus sequence W-X-X-W of the TPRs, and N-glycosylated. These other glycosylations can also facilitate secretion. In terms of tissue distribution, highly expressed in adult and fetal lung, lower expression in brain, placenta, heart, stomach and fetal brain and kidney.

The protein resides in the secreted. The protein localises to the extracellular space. Its subcellular location is the extracellular matrix. In terms of biological role, has anti-angiogenic properties. In Homo sapiens (Human), this protein is A disintegrin and metalloproteinase with thrombospondin motifs 8 (ADAMTS8).